Here is a 160-residue protein sequence, read N- to C-terminus: uncharacterized protein (160 aa).

The region spanning 37 to 110 (LMSLKPKEDI…TDYLKLYTIY (74 aa)) is the Cupin type-2 domain.

It is found in the virion. This is an uncharacterized protein from Acanthamoeba polyphaga mimivirus (APMV).